A 282-amino-acid chain; its full sequence is Succinate dehydrogenase [ubiquinone] iron-sulfur subunit, mitochondrial (282 aa).

In terms of domain architecture, 2Fe-2S ferredoxin-type spans 43 to 131; that stretch reads YRFNPEAPGA…STKIYPLPHM (89 aa). 4 residues coordinate [2Fe-2S] cluster: Cys91, Cys96, Cys99, and Cys111. The 4Fe-4S ferredoxin-type domain occupies 174 to 204; sequence ERDRLDGLYECILCACCSTSCPSYWWNADKY. Residues Cys184, Cys187, and Cys190 each contribute to the [4Fe-4S] cluster site. Cys194 serves as a coordination point for [3Fe-4S] cluster. Trp199 is a binding site for a ubiquinone. Positions 241 and 247 each coordinate [3Fe-4S] cluster. Cys251 serves as a coordination point for [4Fe-4S] cluster.

The protein belongs to the succinate dehydrogenase/fumarate reductase iron-sulfur protein family. Component of complex II composed of four subunits: a flavoprotein (FP), an iron-sulfur protein (IP), and a cytochrome b composed of a large and a small subunit. [2Fe-2S] cluster is required as a cofactor. Requires [3Fe-4S] cluster as cofactor. It depends on [4Fe-4S] cluster as a cofactor.

It is found in the mitochondrion inner membrane. It carries out the reaction a quinone + succinate = fumarate + a quinol. The protein operates within carbohydrate metabolism; tricarboxylic acid cycle; fumarate from succinate (eukaryal route): step 1/1. Functionally, iron-sulfur protein (IP) subunit of succinate dehydrogenase (SDH) that is involved in complex II of the mitochondrial electron transport chain and is responsible for transferring electrons from succinate to ubiquinone (coenzyme Q). The chain is Succinate dehydrogenase [ubiquinone] iron-sulfur subunit, mitochondrial from Caenorhabditis briggsae.